Here is a 795-residue protein sequence, read N- to C-terminus: Protocadherin beta-5 (795 aa).

Residues 1 to 30 form the signal peptide; that stretch reads METALAKTPQKRQVMFLAILLLLWEAGSEA. At 31 to 689 the chain is on the extracellular side; the sequence is VRYSIPEETE…AQADSLTVYL (659 aa). Cadherin domains follow at residues 35 to 133, 138 to 242, 247 to 346, 351 to 450, and 455 to 560; these read IPEE…SPEF, MLLK…APEF, YEVQ…APEL, LSSP…APAF, and YTLF…SPFV. Asn-169 is a glycosylation site (N-linked (GlcNAc...) asparagine). An N6-acetyllysine modification is found at Lys-296. Residues Asn-417 and Asn-435 are each glycosylated (N-linked (GlcNAc...) asparagine). N-linked (GlcNAc...) asparagine glycosylation occurs at Asn-566. A Cadherin 6 domain is found at 567–670; the sequence is GSAPCTELVP…LVDGFSQPYL (104 aa). Residues 690 to 710 traverse the membrane as a helical segment; that stretch reads VVALASVSSLFLFSVLLFVAV. The Cytoplasmic segment spans residues 711 to 795; that stretch reads RLCRRSRAAP…AAFRNSFGLN (85 aa).

It is found in the cell membrane. Its function is as follows. Potential calcium-dependent cell-adhesion protein. May be involved in the establishment and maintenance of specific neuronal connections in the brain. The sequence is that of Protocadherin beta-5 (PCDHB5) from Pan troglodytes (Chimpanzee).